Consider the following 507-residue polypeptide: Cobyric acid synthase (507 aa).

The 196-residue stretch at 273-468 (RPVIAVIAYP…LHGMFEDPAV (196 aa)) folds into the GATase cobBQ-type domain. Catalysis depends on Cys354, which acts as the Nucleophile. The active site involves His460.

It belongs to the CobB/CobQ family. CobQ subfamily.

It participates in cofactor biosynthesis; adenosylcobalamin biosynthesis. Catalyzes amidations at positions B, D, E, and G on adenosylcobyrinic A,C-diamide. NH(2) groups are provided by glutamine, and one molecule of ATP is hydrogenolyzed for each amidation. This chain is Cobyric acid synthase, found in Polaromonas sp. (strain JS666 / ATCC BAA-500).